The primary structure comprises 389 residues: Vacuolar protein sorting-associated protein vts1 (389 aa).

Positions 149–335 are disordered; sequence NPQRKAKTPS…RPSQPTKASP (187 aa). Composition is skewed to polar residues over residues 156 to 177, 184 to 219, and 227 to 282; these read TPSN…TLPT, TNAS…SSEP, and SLSS…PESK. The span at 294–306 shows a compositional bias: low complexity; it reads TSITTTSTSIDPS. Polar residues predominate over residues 308-334; sequence AFSSKSTLATTRTNAPLSRPSQPTKAS.

It belongs to the VTA1 family. In terms of assembly, homodimer (in cytoplasm).

It is found in the cytoplasm. It localises to the endosome membrane. Functionally, has a role in the formation of the multivesicular body (MVB). Required for the sorting of lipids to form intralumenal vesicles and for fluid-phase transport to the vacuole. Required for sorting several plasma membrane proteins into the MVB. This is Vacuolar protein sorting-associated protein vts1 (vts1) from Schizosaccharomyces pombe (strain 972 / ATCC 24843) (Fission yeast).